Here is a 932-residue protein sequence, read N- to C-terminus: Beta-mannosidase A (932 aa).

The first 21 residues, 1-21 (MRIREQTILALLSPGLPPVTG), serve as a signal peptide directing secretion. N-linked (GlcNAc...) asparagine glycosylation is found at Asn40, Asn248, Asn283, Asn317, and Asn348. Glu480 serves as the catalytic Proton donor. Asn538, Asn609, Asn632, Asn659, Asn739, Asn762, and Asn791 each carry an N-linked (GlcNAc...) asparagine glycan.

Belongs to the glycosyl hydrolase 2 family. Beta-mannosidase A subfamily. In terms of assembly, homodimer.

The protein resides in the secreted. The catalysed reaction is Hydrolysis of terminal, non-reducing beta-D-mannose residues in beta-D-mannosides.. The protein operates within glycan metabolism; N-glycan degradation. Its function is as follows. Exoglycosidase that cleaves the single beta-linked mannose residue from the non-reducing end of beta-mannosidic oligosaccharides of various complexity and length. Involved in the degradation of polymeric mannan and galactomannan. The polypeptide is Beta-mannosidase A (mndA) (Aspergillus clavatus (strain ATCC 1007 / CBS 513.65 / DSM 816 / NCTC 3887 / NRRL 1 / QM 1276 / 107)).